Reading from the N-terminus, the 395-residue chain is Gastric triacylglycerol lipase (395 aa).

Positions 1-18 (MWLLLVTSVLSAFGGAHG) are cleaved as a signal peptide. A glycan (N-linked (GlcNAc...) asparagine) is linked at Asn-33. In terms of domain architecture, AB hydrolase-1 spans 81–376 (LQHGLIASAT…LPYNHLDFIW (296 aa)). The active-site Nucleophile is Ser-171. Cys-245 and Cys-254 are joined by a disulfide. N-linked (GlcNAc...) asparagine glycosylation occurs at Asn-270. Catalysis depends on charge relay system residues Asp-342 and His-371.

Belongs to the AB hydrolase superfamily. Lipase family.

The protein resides in the secreted. The enzyme catalyses a triacylglycerol + H2O = a diacylglycerol + a fatty acid + H(+). It catalyses the reaction 1,2,3-tri-(9Z-octadecenoyl)-glycerol + H2O = 1,2-di-(9Z-octadecenoyl)-sn-glycerol + (9Z)-octadecenoate + H(+). It carries out the reaction 1,2,3-trioctanoylglycerol + H2O = 1,2-dioctanoyl-sn-glycerol + octanoate + H(+). Its function is as follows. Catalyzes the hydrolysis of triacylglycerols to yield free fatty acids, diacylglycerol, monoacylglycerol, and glycerol. Shows a preferential hydrolysis at the sn-3 position of triacylglycerol. The sequence is that of Gastric triacylglycerol lipase (Lipf) from Mus musculus (Mouse).